The sequence spans 75 residues: Small ribosomal subunit protein bS18c (75 aa).

Belongs to the bacterial ribosomal protein bS18 family. As to quaternary structure, part of the 30S ribosomal subunit.

Its subcellular location is the plastid. The protein resides in the chloroplast. The sequence is that of Small ribosomal subunit protein bS18c from Angiopteris evecta (Mule's foot fern).